A 367-amino-acid chain; its full sequence is uncharacterized protein (367 aa).

Residues 6–26 traverse the membrane as a helical segment; sequence IAAGVVVALAAVWCTSAWFTG.

To E.coli YdgA and YihF.

It localises to the membrane. This is an uncharacterized protein from Haemophilus influenzae (strain ATCC 51907 / DSM 11121 / KW20 / Rd).